Here is a 227-residue protein sequence, read N- to C-terminus: MDQPTPQPAYVLHSRAYKETSALVDFFTPQGRVRAVLRRARSKGGSLVRPFVPLEVELRGRGELKNVGGMDSAGTAAWLHGDALFSGLYLNELLMRLLPAEAPFPTLFEHYTLTLQALGAGRPLEPLLRSFEWRLLDELGYAFSLQQDVNDQPVAADGLYRLRVDAGLERVELAQPGLFRGTELLALAEANWEAPGALLAAKRLMRQALAVHLGAKPLVSRELFRKR.

The protein belongs to the RecO family.

Involved in DNA repair and RecF pathway recombination. This Pseudomonas putida (strain GB-1) protein is DNA repair protein RecO.